A 327-amino-acid chain; its full sequence is Cobalamin biosynthesis protein CobD (327 aa).

The next 4 helical transmembrane spans lie at 63 to 83, 84 to 104, 158 to 178, and 305 to 325; these read VGILVLLAGATALGVVLARLF, DVLGALGSLLEVVTVAVFLAQ, FSDGVVAPAFWYAVAGLPGLL, and VFYAACSVMTFAFAAAALPLL.

This sequence belongs to the CobD/CbiB family.

It localises to the cell membrane. It participates in cofactor biosynthesis; adenosylcobalamin biosynthesis. In terms of biological role, converts cobyric acid to cobinamide by the addition of aminopropanol on the F carboxylic group. This chain is Cobalamin biosynthesis protein CobD, found in Rhizobium meliloti (strain 1021) (Ensifer meliloti).